A 408-amino-acid polypeptide reads, in one-letter code: S-adenosylmethionine:tRNA ribosyltransferase-isomerase (408 aa).

The protein belongs to the QueA family. As to quaternary structure, monomer.

Its subcellular location is the cytoplasm. It carries out the reaction 7-aminomethyl-7-carbaguanosine(34) in tRNA + S-adenosyl-L-methionine = epoxyqueuosine(34) in tRNA + adenine + L-methionine + 2 H(+). It functions in the pathway tRNA modification; tRNA-queuosine biosynthesis. In terms of biological role, transfers and isomerizes the ribose moiety from AdoMet to the 7-aminomethyl group of 7-deazaguanine (preQ1-tRNA) to give epoxyqueuosine (oQ-tRNA). The sequence is that of S-adenosylmethionine:tRNA ribosyltransferase-isomerase from Trichormus variabilis (strain ATCC 29413 / PCC 7937) (Anabaena variabilis).